An 89-amino-acid chain; its full sequence is Small ribosomal subunit protein uS14 (89 aa).

Belongs to the universal ribosomal protein uS14 family. In terms of assembly, part of the 30S ribosomal subunit. Contacts proteins S3 and S10.

Binds 16S rRNA, required for the assembly of 30S particles and may also be responsible for determining the conformation of the 16S rRNA at the A site. This is Small ribosomal subunit protein uS14 from Akkermansia muciniphila (strain ATCC BAA-835 / DSM 22959 / JCM 33894 / BCRC 81048 / CCUG 64013 / CIP 107961 / Muc).